The sequence spans 144 residues: Nucleoside diphosphate kinase (144 aa).

Residues Lys-9, Phe-57, Arg-85, Thr-91, Arg-102, and Asn-112 each contribute to the ATP site. His-115 (pros-phosphohistidine intermediate) is an active-site residue.

It belongs to the NDK family. Homotetramer. Mg(2+) serves as cofactor.

It is found in the cytoplasm. It catalyses the reaction a 2'-deoxyribonucleoside 5'-diphosphate + ATP = a 2'-deoxyribonucleoside 5'-triphosphate + ADP. The enzyme catalyses a ribonucleoside 5'-diphosphate + ATP = a ribonucleoside 5'-triphosphate + ADP. Major role in the synthesis of nucleoside triphosphates other than ATP. The ATP gamma phosphate is transferred to the NDP beta phosphate via a ping-pong mechanism, using a phosphorylated active-site intermediate. This chain is Nucleoside diphosphate kinase, found in Chlamydia pneumoniae (Chlamydophila pneumoniae).